A 456-amino-acid polypeptide reads, in one-letter code: Glycine--tRNA ligase (456 aa).

Arg-98 and Glu-168 together coordinate substrate. Residues 200–202 (RNE), 210–215 (FRTREF), 285–286 (EL), and 329–332 (GVER) contribute to the ATP site. 215-219 (FEQME) lines the substrate pocket. 325-329 (EPSVG) is a binding site for substrate.

The protein belongs to the class-II aminoacyl-tRNA synthetase family. Homodimer.

It is found in the cytoplasm. It carries out the reaction tRNA(Gly) + glycine + ATP = glycyl-tRNA(Gly) + AMP + diphosphate. Functionally, catalyzes the attachment of glycine to tRNA(Gly). This is Glycine--tRNA ligase from Mycoplasma capricolum subsp. capricolum (strain California kid / ATCC 27343 / NCTC 10154).